A 155-amino-acid chain; its full sequence is Calmodulin, flagellar (155 aa).

EF-hand domains are found at residues 14–49, 50–85, 87–122, and 123–155; these read EQIA…LGQN, PTEA…KMKD, DNEE…LGEK, and LTDE…MMQK. 19 residues coordinate Ca(2+): D27, D29, D31, T33, E38, D63, D65, N67, T69, E74, D100, D102, N104, E111, D136, D138, D140, Q142, and E147.

The protein belongs to the calmodulin family.

The protein localises to the cell projection. It localises to the cilium. Its subcellular location is the flagellum. In terms of biological role, calmodulin mediates the control of a large number of enzymes, ion channels and other proteins by Ca(2+). Among the enzymes to be stimulated by the calmodulin-Ca(2+) complex are a number of protein kinases and phosphatases. The polypeptide is Calmodulin, flagellar (CAM1) (Naegleria gruberi (Amoeba)).